The primary structure comprises 208 residues: Imidazole glycerol phosphate synthase subunit HisH (208 aa).

The Glutamine amidotransferase type-1 domain maps to 2 to 208 (NVTIVDYNSG…LKIIENFLNL (207 aa)). The active-site Nucleophile is the Cys-85. Catalysis depends on residues His-190 and Glu-192.

In terms of assembly, heterodimer of HisH and HisF.

It localises to the cytoplasm. The enzyme catalyses 5-[(5-phospho-1-deoxy-D-ribulos-1-ylimino)methylamino]-1-(5-phospho-beta-D-ribosyl)imidazole-4-carboxamide + L-glutamine = D-erythro-1-(imidazol-4-yl)glycerol 3-phosphate + 5-amino-1-(5-phospho-beta-D-ribosyl)imidazole-4-carboxamide + L-glutamate + H(+). It catalyses the reaction L-glutamine + H2O = L-glutamate + NH4(+). It participates in amino-acid biosynthesis; L-histidine biosynthesis; L-histidine from 5-phospho-alpha-D-ribose 1-diphosphate: step 5/9. Functionally, IGPS catalyzes the conversion of PRFAR and glutamine to IGP, AICAR and glutamate. The HisH subunit catalyzes the hydrolysis of glutamine to glutamate and ammonia as part of the synthesis of IGP and AICAR. The resulting ammonia molecule is channeled to the active site of HisF. In Pelagibacter ubique (strain HTCC1062), this protein is Imidazole glycerol phosphate synthase subunit HisH.